Reading from the N-terminus, the 196-residue chain is Imidazoleglycerol-phosphate dehydratase (196 aa).

This sequence belongs to the imidazoleglycerol-phosphate dehydratase family.

The protein localises to the cytoplasm. The catalysed reaction is D-erythro-1-(imidazol-4-yl)glycerol 3-phosphate = 3-(imidazol-4-yl)-2-oxopropyl phosphate + H2O. The protein operates within amino-acid biosynthesis; L-histidine biosynthesis; L-histidine from 5-phospho-alpha-D-ribose 1-diphosphate: step 6/9. The protein is Imidazoleglycerol-phosphate dehydratase of Oleidesulfovibrio alaskensis (strain ATCC BAA-1058 / DSM 17464 / G20) (Desulfovibrio alaskensis).